The chain runs to 274 residues: Ceramide synthase (274 aa).

The TLC domain maps to 34–261 (ADAVIVSARL…ICRGACRLFW (228 aa)). Transmembrane regions (helical) follow at residues 130–150 (FLMV…SVVW), 159–179 (LGCM…KILI), 194–214 (ALML…LYWA), and 223–243 (LLAV…LLLA).

In terms of tissue distribution, expressed in testis. Expressed in the retina with higher expression levels in the macular than in the peripheral region.

It is found in the golgi apparatus membrane. Its subcellular location is the endoplasmic reticulum membrane. It carries out the reaction sphing-4-enine + octadecanoyl-CoA = N-octadecanoylsphing-4-enine + CoA + H(+). The enzyme catalyses eicosanoyl-CoA + sphing-4-enine = N-eicosanoyl-sphing-4-enine + CoA + H(+). The catalysed reaction is sphing-4-enine + hexadecanoyl-CoA = N-hexadecanoylsphing-4-enine + CoA + H(+). Functionally, involved in ceramide synthesis. The chain is Ceramide synthase from Homo sapiens (Human).